Here is a 182-residue protein sequence, read N- to C-terminus: Late embryogenesis abundant protein 3 (182 aa).

Residues 1–51 form a disordered region; sequence MAQHQHSPQRPRDQDNTRPHDQYGIVFSVSGDDVARKQGDSFSQPDPTVAT. The Nuclear localization signal (NLS) motif lies at 7–11; the sequence is SPQRP. The span at 10 to 21 shows a compositional bias: basic and acidic residues; the sequence is RPRDQDNTRPHD. SMP domains follow at residues 58–115 and 123–181; these read VTIG…TNEQ and VNIA…LNQQ. Residues 145–182 are disordered; the sequence is EDAEAVVGAELRSSSEMKTTPGGVADSMSAGARLNQQL.

This sequence belongs to the LEA type SMP family.

The protein localises to the cytoplasm. Its subcellular location is the nucleus. Functionally, LEA proteins are late embryonic proteins abundant in higher plant seed embryos. The function of those proteins is not known. The chain is Late embryogenesis abundant protein 3 from Arabidopsis thaliana (Mouse-ear cress).